Here is a 534-residue protein sequence, read N- to C-terminus: Prolyl 4-hydroxylase subunit alpha-1 (534 aa).

The N-terminal stretch at 1–17 (MIWGVLMMGILLPQCSA) is a signal peptide. Asparagine 113 carries an N-linked (GlcNAc...) asparagine glycan. The TPR repeat unit spans residues 205 to 238 (VSVLDYLSYAVYQQGDLDKALLLTKKLLELDPEH). The N-linked (GlcNAc...) asparagine glycan is linked to asparagine 259. Positions 411 to 519 (TAEELQVANY…KWVSNKWLHE (109 aa)) constitute a Fe2OG dioxygenase domain. Fe cation contacts are provided by histidine 429, aspartate 431, and histidine 500. 2-oxoglutarate is bound at residue lysine 510.

It belongs to the P4HA family. In terms of assembly, heterotetramer of two alpha-1 chains and two beta chains (P4HB)(the beta chain is the multi-functional PDI), where P4HB plays the role of a structural subunit; this tetramer catalyzes the formation of 4-hydroxyproline in collagen. Fe(2+) is required as a cofactor. It depends on L-ascorbate as a cofactor.

It is found in the endoplasmic reticulum lumen. The catalysed reaction is L-prolyl-[collagen] + 2-oxoglutarate + O2 = trans-4-hydroxy-L-prolyl-[collagen] + succinate + CO2. Catalyzes the post-translational formation of 4-hydroxyproline in -Xaa-Pro-Gly- sequences in collagens and other proteins. The chain is Prolyl 4-hydroxylase subunit alpha-1 (P4ha1) from Rattus norvegicus (Rat).